The sequence spans 291 residues: Beta-lactamase OXY-1 (291 aa).

The N-terminal stretch at 1–24 is a signal peptide; sequence MLKSSWRKTALMAAAAVPLLLASG. Residue S73 is the Acyl-ester intermediate of the active site. 237 to 239 is a substrate binding site; the sequence is KTG.

The protein belongs to the class-A beta-lactamase family.

The catalysed reaction is a beta-lactam + H2O = a substituted beta-amino acid. Functionally, hydrolyzes broad-spectrum beta-lactam antibiotics. Active against cephalosporins. In Klebsiella oxytoca, this protein is Beta-lactamase OXY-1 (bla).